The primary structure comprises 323 residues: Serine/threonine-protein phosphatase PP1-gamma catalytic subunit (323 aa).

At alanine 2 the chain carries N-acetylalanine. Residues aspartate 64, histidine 66, aspartate 92, and asparagine 124 each contribute to the Mn(2+) site. Histidine 125 serves as the catalytic Proton donor. 2 residues coordinate Mn(2+): histidine 173 and histidine 248. The segment at 302–323 (KKPNATRPVTPPRGMITKQAKK) is disordered. Phosphothreonine is present on residues threonine 307 and threonine 311.

It belongs to the PPP phosphatase family. PP-1 subfamily. As to quaternary structure, PP1 comprises a catalytic subunit, PPP1CA, PPP1CB or PPP1CC, which is folded into its native form by inhibitor 2 and glycogen synthetase kinase 3, and then complexed to one or several targeting or regulatory subunits. PPP1R12A, PPP1R12B and PPP1R12C mediate binding to myosin. PPP1R3A (in skeletal muscle), PPP1R3B (in sliver), PPP1R3C, PPP1R3D and PPP1R3F (in brain) mediate binding to glycogen. PPP1R15A and PPP1R15B mediate binding to EIF2S1. Part of a complex containing PPP1R15B, PP1 and NCK1/2. Interacts with PPP1R3B, PPP1R7 and CDCA2. Isoform 2 interacts with SPZ1. Interacts with IKFZ1; the interaction targets PPP1CC to pericentromeric heterochromatin, dephosphorylates IKAROS, stabilizes it and prevents it from degradation. Interacts with NOM1 and PPP1R8. Component of the PTW/PP1 phosphatase complex, composed of PPP1R10/PNUTS, TOX4, WDR82, and PPP1CA or PPP1CB or PPP1CC. Interacts with PPP1R8. Interacts with NEK2. Interacts with URI1; the interaction is phosphorylation-dependent and occurs in a growth factor-dependent manner. Interacts with FOXP3. Interacts with TMEM225 (via RVxF motif). Interacts with MKI67. Interacts with RRP1B; this targets PPP1CC to the nucleolus. Found in a complex with PPP1CA, PPP1CC, SHC1 and PEAK1. Interacts with DYNLT4. Interacts (via RVxF motif) with FIRRM; regulates PLK1 kinase activity. Interacts with the KNL1 complex subunit KNL1; the interaction is direct and mutually exclusive with KNL1 binding to microtubules. Component of the SHOC2-MRAS-PP1c (SMP) complex consisting of SHOC2, GTP-bound M-Ras/MRAS and the catalytic subunit of protein phosphatase 1 (either PPP1CA, PPP1CB or PPP1CC). SHOC2 and PP1c preferably bind M-Ras/MRAS, but they also bind K-Ras/KRAS, N-Ras/NRAS and H-Ras/HRAS; these interactions are GTP-dependent and both SHOC2 and PP1c are required to form a stable complex. Interacts with SHOC2 in the absence of Ras GTPases. The cofactor is Mn(2+). In terms of processing, phosphorylated by NEK2. Isoform 2 is expressed only in testis, in the late spermatocytes and early spematids (at protein level).

The protein localises to the cytoplasm. It is found in the nucleus. The protein resides in the cleavage furrow. It localises to the nucleolus. Its subcellular location is the nucleoplasm. The protein localises to the chromosome. It is found in the centromere. The protein resides in the kinetochore. It localises to the nucleus speckle. Its subcellular location is the midbody. The protein localises to the mitochondrion. It is found in the cytoskeleton. The protein resides in the microtubule organizing center. The enzyme catalyses O-phospho-L-seryl-[protein] + H2O = L-seryl-[protein] + phosphate. It carries out the reaction O-phospho-L-threonyl-[protein] + H2O = L-threonyl-[protein] + phosphate. Its activity is regulated as follows. Inactivated by binding to URI1. Protein phosphatase that associates with over 200 regulatory proteins to form highly specific holoenzymes which dephosphorylate hundreds of biological targets. Protein phosphatase 1 (PP1) is essential for cell division, and participates in the regulation of glycogen metabolism, muscle contractility and protein synthesis. Dephosphorylates RPS6KB1. Involved in regulation of ionic conductances and long-term synaptic plasticity. May play an important role in dephosphorylating substrates such as the postsynaptic density-associated Ca(2+)/calmodulin dependent protein kinase II. Component of the PTW/PP1 phosphatase complex, which plays a role in the control of chromatin structure and cell cycle progression during the transition from mitosis into interphase. In balance with CSNK1D and CSNK1E, determines the circadian period length, through the regulation of the speed and rhythmicity of PER1 and PER2 phosphorylation. May dephosphorylate CSNK1D and CSNK1E. Regulates the recruitment of the SKA complex to kinetochores. Core component of the SHOC2-MRAS-PP1c (SMP) holophosphatase complex that regulates the MAPK pathway activation. Dephosphorylates MKI67 at the onset of anaphase. The SMP complex specifically dephosphorylates the inhibitory phosphorylation at 'Ser-259' of RAF1 kinase, 'Ser-365' of BRAF kinase and 'Ser-214' of ARAF kinase, stimulating their kinase activities. The SMP complex enhances the dephosphorylation activity and substrate specificity of PP1c. Functionally, required for normal male fertility. This chain is Serine/threonine-protein phosphatase PP1-gamma catalytic subunit (Ppp1cc), found in Rattus norvegicus (Rat).